The chain runs to 384 residues: MTLRFKSRIEQALNEREHSRLTRRLQLLDRSAQGELIQQDRTYLNFSSNDYLGLANDAELVQAWQTGLARFGAGSGASPMVTGFSSAHAELEHELCHWLGYERAVLFSSGFSANQALLFTLLEKEDLLLQDKLNHASLMEAGMLSPATMKRFKHNDTEHLRQLLHEQSNSLVVTEGVFSMDGDCAPLAQIATLVKQRAWLMVDDAHGIGVLGEDGAGSCQAAGIHPEILVVTFGKAFGLAGAAVLCDAHVGDYLTQFARHHVYSTAMPPAQAHALTHAARMIQSQSWRREQLAELLACFDEQCRNIPGFVATQTPIKPWLLGSSDSALSASHELKQQGIWVSAIRPPTVPVGSARLRITITAAHTQAQIRRLSEQLKHVMEKDT.

Arginine 23 is a binding site for substrate. 110-111 (GF) serves as a coordination point for pyridoxal 5'-phosphate. Histidine 135 contacts substrate. Pyridoxal 5'-phosphate contacts are provided by serine 179, histidine 206, and threonine 232. N6-(pyridoxal phosphate)lysine is present on lysine 235. Threonine 348 is a substrate binding site.

Belongs to the class-II pyridoxal-phosphate-dependent aminotransferase family. BioF subfamily. As to quaternary structure, homodimer. Pyridoxal 5'-phosphate is required as a cofactor.

It catalyses the reaction 6-carboxyhexanoyl-[ACP] + L-alanine + H(+) = (8S)-8-amino-7-oxononanoate + holo-[ACP] + CO2. The protein operates within cofactor biosynthesis; biotin biosynthesis. Its function is as follows. Catalyzes the decarboxylative condensation of pimeloyl-[acyl-carrier protein] and L-alanine to produce 8-amino-7-oxononanoate (AON), [acyl-carrier protein], and carbon dioxide. This Vibrio cholerae serotype O1 (strain ATCC 39315 / El Tor Inaba N16961) protein is 8-amino-7-oxononanoate synthase.